The following is a 376-amino-acid chain: Probable inactive protein kinase At3g63330 (376 aa).

In terms of domain architecture, Protein kinase spans 1–370 (MVERGPTVYL…VDEALQHPYF (370 aa)).

Belongs to the protein kinase superfamily. Ser/Thr protein kinase family.

The protein is Probable inactive protein kinase At3g63330 of Arabidopsis thaliana (Mouse-ear cress).